We begin with the raw amino-acid sequence, 442 residues long: Cyclic 2,3-diphosphoglycerate synthetase (442 aa).

Belongs to the cyclic 2,3-diphosphoglycerate synthetase family.

It localises to the cytoplasm. The catalysed reaction is (2R)-2,3-bisphosphoglycerate + ATP + H(+) = cyclic (2R)-2,3-bisphosphoglycerate + ADP + phosphate. Functionally, catalyzes the formation of cyclic 2,3-diphosphoglycerate (cDPG) by formation of an intramolecular phosphoanhydride bond at the expense of ATP. This chain is Cyclic 2,3-diphosphoglycerate synthetase, found in Rubrobacter xylanophilus (strain DSM 9941 / JCM 11954 / NBRC 16129 / PRD-1).